The sequence spans 287 residues: Type 1 encapsulin shell protein EncA (287 aa).

It belongs to the encapsulin family. Family 1 subfamily. As to quaternary structure, the 32 nm encapsulin nanocompartment is formed by 180 subunits; monomers form pentamers which assemble to form shells. There are 36 pores where the pentamers meet as well as 3-fold axis channels and dimer channels. The N-terminus of the protein is inside the shell.

Its subcellular location is the encapsulin nanocompartment. In terms of biological role, shell component of a type 1, iron-storage encapsulin nanocompartment. Encapsulin nanocompartments are 32 nm in diameter with an iron- and phosphorus-rich core (4Fe:1P) about 24 nm in diameter. Upon expression in E.coli most particles are 32 nm, 20% are 18 nm. The core is filled with an average of 14 dense granules, 5-6 nm in diameter that are not evenly distributed. Each nanocompartment is estimated to hold 30,000-35,000 Fe atoms. The minor proteins EncB, EncC and EncD probably lie against the interior face of the nanocompartment. The chain is Type 1 encapsulin shell protein EncA from Myxococcus xanthus (strain DK1622).